The chain runs to 262 residues: 14-3-3-like protein GF14-E (262 aa).

This sequence belongs to the 14-3-3 family. In terms of tissue distribution, ubiquitous.

It is found in the cytoplasm. Its subcellular location is the nucleus. Its function is as follows. Is associated with a DNA binding complex that binds to the G box, a well-characterized cis-acting DNA regulatory element found in plant genes. This chain is 14-3-3-like protein GF14-E (GF14E), found in Oryza sativa subsp. japonica (Rice).